Consider the following 1873-residue polypeptide: Ankyrin repeat domain-containing protein 31 (1873 aa).

2 disordered regions span residues 1 to 27 and 361 to 380; these read MEEGVQAPDWDSDETVIEGSVTESDLE and EPLSNKRNSNSVTNSSDQET. Residues 361–379 show a composition bias toward polar residues; it reads EPLSNKRNSNSVTNSSDQE. ANK repeat units lie at residues 488–517, 521–550, and 554–583; these read FGENLVYKAALHDDADLVHHCIKKGGNVNQ, AGWTALHEASVGGFYRTASELLKGGADVNI, and YQITPLHDAVMNGHYKVAELLLLNGADPLF. Positions 707-740 are disordered; it reads TGLRKGNLHNVKDPNTNVPKGIGRRKTQHKRTQV. Residues 728–737 are compositionally biased toward basic residues; it reads IGRRKTQHKR. 3 ANK repeats span residues 1154–1183, 1187–1216, and 1220–1249; these read RGESQLHLAVRRGNLPLVKALIESGADVNL, AGWTPLHEASNEGSIDIIVELLKAGAKVNC, and DGILPLHDAVANNHLKAAEILLQNGANPNQ. 4 disordered regions span residues 1242 to 1263, 1449 to 1482, 1512 to 1549, and 1606 to 1634; these read QNGANPNQKDQKQKSALDEADD, RSEISSEKDSQELTSLENLEHPQSGSLSPVSGSM, FSGNDMNSKQNGSDCTLDGFPKSRHSDGTEKNKLPSQP, and CDQDLSNYDPKRGNRKTSSQQSPTGASES. Basic and acidic residues predominate over residues 1250–1263; that stretch reads KDQKQKSALDEADD. Composition is skewed to polar residues over residues 1460-1482 and 1515-1525; these read ELTSLENLEHPQSGSLSPVSGSM and NDMNSKQNGSD. Residues 1535 to 1544 are compositionally biased toward basic and acidic residues; sequence RHSDGTEKNK. The span at 1621–1632 shows a compositional bias: polar residues; it reads KTSSQQSPTGAS. The RAMA domain occupies 1683-1778; the sequence is KKALNYSTAP…TYLGKELLRY (96 aa).

In terms of assembly, interacts with REC114; the interaction is direct. Interacts with IHO1.

It is found in the nucleus. Its subcellular location is the chromosome. Its function is as follows. Required for DNA double-strand breaks (DSBs) formation during meiotic recombination. Regulates the spatial and temporal patterns of pre-DSB recombinosome assembly and recombination activity by acting as a scaffold that anchors REC114 and other factors to specific genomic locations, thereby regulating DSB formation. Plays a key role in recombination in the pseudoautosomal regions of sex chromosomes. This is Ankyrin repeat domain-containing protein 31 from Homo sapiens (Human).